Consider the following 451-residue polypeptide: Trigger factor (451 aa).

A PPIase FKBP-type domain is found at 162–243 (GDYAIIDITT…VQQSKERKLP (82 aa)).

It belongs to the FKBP-type PPIase family. Tig subfamily.

It is found in the cytoplasm. It carries out the reaction [protein]-peptidylproline (omega=180) = [protein]-peptidylproline (omega=0). Functionally, involved in protein export. Acts as a chaperone by maintaining the newly synthesized protein in an open conformation. Functions as a peptidyl-prolyl cis-trans isomerase. This chain is Trigger factor, found in Corynebacterium aurimucosum (strain ATCC 700975 / DSM 44827 / CIP 107346 / CN-1) (Corynebacterium nigricans).